The following is an 826-amino-acid chain: Disintegrin and metalloproteinase domain-containing protein 8 (826 aa).

Positions 1-16 (MLGLWLLSVLWTPAVA) are cleaved as a signal peptide. Over 17-658 (PGPPLPHVKQ…VSDEQAASTS (642 aa)) the chain is Extracellular. Residues Asn-89 and Asn-260 are each glycosylated (N-linked (GlcNAc...) asparagine). The 200-residue stretch at 196-395 (RYVELYVVAD…PQTGCLTNVP (200 aa)) folds into the Peptidase M12B domain. 12 cysteine pairs are disulfide-bonded: Cys-305–Cys-390, Cys-346–Cys-374, Cys-348–Cys-357, Cys-430–Cys-452, Cys-443–Cys-449, Cys-461–Cys-481, Cys-468–Cys-498, Cys-493–Cys-503, Cys-563–Cys-615, Cys-615–Cys-625, Cys-619–Cys-631, and Cys-633–Cys-642. Position 329 (His-329) interacts with Zn(2+). The active site involves Glu-330. Zn(2+) contacts are provided by His-333 and His-339. Residues 403–489 (GPVCGNLFVE…TCPEDAFQQN (87 aa)) form the Disintegrin domain. Asn-431 carries an N-linked (GlcNAc...) asparagine glycan. The EGF-like domain maps to 611–643 (RSENCSAKCNNHGVCNHKRECHCHKGWAPPNCV). The N-linked (GlcNAc...) asparagine glycan is linked to Asn-614. A helical membrane pass occupies residues 659-683 (LPVSVVVVLVILVAAMVIVAGIVIY). Residues 684–826 (RKAPRQIQRR…VALKVPIQKR (143 aa)) lie on the Cytoplasmic side of the membrane. The interval 701–826 (SGLSNPLFYT…VALKVPIQKR (126 aa)) is disordered. The span at 733–748 (PPRPIVKPKRPPPAPP) shows a compositional bias: pro residues. A compositionally biased stretch (low complexity) spans 749–763 (GAVSSSPLPVPVYAP).

In terms of assembly, interacts with FST3. Zn(2+) is required as a cofactor. As to expression, macrophages.

The protein localises to the membrane. In terms of biological role, possible involvement in extravasation of leukocytes. The protein is Disintegrin and metalloproteinase domain-containing protein 8 (Adam8) of Mus musculus (Mouse).